The primary structure comprises 160 residues: Transcriptional repressor NrdR (160 aa).

Positions 1–11 (MRCPNCNSLDT) are enriched in polar residues. The segment at 1–20 (MRCPNCNSLDTQVKDSRPTE) is disordered. A zinc finger spans residues 3–34 (CPNCNSLDTQVKDSRPTEDSSVIRRRRVCIAC). In terms of domain architecture, ATP-cone spans 49–139 (LIVIKRNGRR…VYRNFREAKD (91 aa)).

The protein belongs to the NrdR family. The cofactor is Zn(2+).

Functionally, negatively regulates transcription of bacterial ribonucleotide reductase nrd genes and operons by binding to NrdR-boxes. This is Transcriptional repressor NrdR from Rhodopseudomonas palustris (strain ATCC BAA-98 / CGA009).